The chain runs to 238 residues: ATP synthase subunit a (238 aa).

5 consecutive transmembrane segments (helical) span residues 15-35, 76-96, 111-131, 167-187, and 208-230; these read IFNLTMLAMTLLIVGVIFVFI, YSLFFLCLFLFMVIANNLGLM, PTANLQYDLTLSFLVILLTHI, LALRIFGNIFAGEVMTSLLLL, and AFSVFISCIQAYVFTLLTSVYLG.

It belongs to the ATPase A chain family. As to quaternary structure, F-type ATPases have 2 components, CF(1) - the catalytic core - and CF(0) - the membrane proton channel. CF(1) has five subunits: alpha(3), beta(3), gamma(1), delta(1), epsilon(1). CF(0) has three main subunits: a(1), b(2) and c(9-12). The alpha and beta chains form an alternating ring which encloses part of the gamma chain. CF(1) is attached to CF(0) by a central stalk formed by the gamma and epsilon chains, while a peripheral stalk is formed by the delta and b chains.

The protein resides in the cell membrane. In terms of biological role, key component of the proton channel; it plays a direct role in the translocation of protons across the membrane. The chain is ATP synthase subunit a from Streptococcus pneumoniae serotype 19F (strain G54).